We begin with the raw amino-acid sequence, 43 residues long: Iota-conotoxin-like Fi11.6 (43 aa).

4 disulfides stabilise this stretch: cysteine 2–cysteine 16, cysteine 9–cysteine 19, cysteine 15–cysteine 24, and cysteine 18–cysteine 35. Proline 8 is modified (4-hydroxyproline). A 4-hydroxyproline modification is found at proline 26. Residue tryptophan 30 is modified to 6'-bromotryptophan. Position 41 is a D-phenylalanine (phenylalanine 41).

It belongs to the conotoxin I1 superfamily. As to expression, expressed by the venom duct.

The protein resides in the secreted. Functionally, iota-conotoxins bind to voltage-gated sodium channels (Nav) and act as agonists by shifting the voltage-dependence of activation to more hyperpolarized levels. Produces general excitatory symptoms. This is Iota-conotoxin-like Fi11.6 from Conus figulinus (Fig cone).